The primary structure comprises 175 residues: Putative FAS1 domain-containing protein 081L (175 aa).

Residues 28–172 (GPIVPSVWTI…GLVHIVDQFP (145 aa)) enclose the FAS1 domain.

This is Putative FAS1 domain-containing protein 081L from Invertebrate iridescent virus 3 (IIV-3).